A 456-amino-acid polypeptide reads, in one-letter code: Serine--tRNA ligase (456 aa).

A disordered region spans residues 49 to 69; it reads HERNEVSSTIGELKQAGEEEA. L-serine is bound at residue 241 to 243; sequence TAE. ATP is bound by residues 272–274 and V288; that span reads RQE. Residue E295 coordinates L-serine. 368-371 lines the ATP pocket; the sequence is EVSS. Position 404 (S404) interacts with L-serine.

The protein belongs to the class-II aminoacyl-tRNA synthetase family. Type-1 seryl-tRNA synthetase subfamily. Homodimer. The tRNA molecule binds across the dimer.

The protein localises to the cytoplasm. The catalysed reaction is tRNA(Ser) + L-serine + ATP = L-seryl-tRNA(Ser) + AMP + diphosphate + H(+). It catalyses the reaction tRNA(Sec) + L-serine + ATP = L-seryl-tRNA(Sec) + AMP + diphosphate + H(+). It participates in aminoacyl-tRNA biosynthesis; selenocysteinyl-tRNA(Sec) biosynthesis; L-seryl-tRNA(Sec) from L-serine and tRNA(Sec): step 1/1. Functionally, catalyzes the attachment of serine to tRNA(Ser). Is also able to aminoacylate tRNA(Sec) with serine, to form the misacylated tRNA L-seryl-tRNA(Sec), which will be further converted into selenocysteinyl-tRNA(Sec). The sequence is that of Serine--tRNA ligase from Halorubrum lacusprofundi (strain ATCC 49239 / DSM 5036 / JCM 8891 / ACAM 34).